The primary structure comprises 338 residues: Ketol-acid reductoisomerase (NADP(+)) (338 aa).

A KARI N-terminal Rossmann domain is found at 1–181 (MKVYYDSDAD…GGGRAGIIET (181 aa)). Residues 24-27 (YGSQ), Arg-47, Ser-50, Ser-52, and 82-85 (DEHQ) each bind NADP(+). Residue His-107 is part of the active site. Gly-133 lines the NADP(+) pocket. In terms of domain architecture, KARI C-terminal knotted spans 182-327 (SFKEETETDL…AKLRAMMPWI (146 aa)). Positions 190, 194, 226, and 230 each coordinate Mg(2+). Ser-251 contacts substrate.

It belongs to the ketol-acid reductoisomerase family. Requires Mg(2+) as cofactor.

It carries out the reaction (2R)-2,3-dihydroxy-3-methylbutanoate + NADP(+) = (2S)-2-acetolactate + NADPH + H(+). It catalyses the reaction (2R,3R)-2,3-dihydroxy-3-methylpentanoate + NADP(+) = (S)-2-ethyl-2-hydroxy-3-oxobutanoate + NADPH + H(+). It participates in amino-acid biosynthesis; L-isoleucine biosynthesis; L-isoleucine from 2-oxobutanoate: step 2/4. Its pathway is amino-acid biosynthesis; L-valine biosynthesis; L-valine from pyruvate: step 2/4. Its function is as follows. Involved in the biosynthesis of branched-chain amino acids (BCAA). Catalyzes an alkyl-migration followed by a ketol-acid reduction of (S)-2-acetolactate (S2AL) to yield (R)-2,3-dihydroxy-isovalerate. In the isomerase reaction, S2AL is rearranged via a Mg-dependent methyl migration to produce 3-hydroxy-3-methyl-2-ketobutyrate (HMKB). In the reductase reaction, this 2-ketoacid undergoes a metal-dependent reduction by NADPH to yield (R)-2,3-dihydroxy-isovalerate. The sequence is that of Ketol-acid reductoisomerase (NADP(+)) from Magnetococcus marinus (strain ATCC BAA-1437 / JCM 17883 / MC-1).